Here is a 118-residue protein sequence, read N- to C-terminus: Small ribosomal subunit protein uS13 (118 aa).

Positions 94-118 (GLPLRGQRTKTNARTRKGPRKPIRK) are disordered.

This sequence belongs to the universal ribosomal protein uS13 family. Part of the 30S ribosomal subunit. Forms a loose heterodimer with protein S19. Forms two bridges to the 50S subunit in the 70S ribosome.

Functionally, located at the top of the head of the 30S subunit, it contacts several helices of the 16S rRNA. In the 70S ribosome it contacts the 23S rRNA (bridge B1a) and protein L5 of the 50S subunit (bridge B1b), connecting the 2 subunits; these bridges are implicated in subunit movement. Contacts the tRNAs in the A and P-sites. The polypeptide is Small ribosomal subunit protein uS13 (Chromohalobacter salexigens (strain ATCC BAA-138 / DSM 3043 / CIP 106854 / NCIMB 13768 / 1H11)).